The sequence spans 747 residues: MFHGQGFSRNRCNVVAVVSGAELCDTNNQIDGTSHQPKYPFPDLSSSGRLKFQVLNNPTPEEFQVAVNSSATDFVYLQGEHSGDSDEVGPLVLGYTDFSTPDALVTLFGSTLPTTVYLELPNGEELAQALYSKGVQYVIYWKNVFSKYAACHFRHSLFSVIQSSCSDTWDVFHVAEASFRLYCTSDNAVLPSNSNRKMNYEMGPCLLGEPPKIDVVSPEADELEEENSLESLPSIKIYDEDVTVRFLLCGPPCTVDTFLLGSLMDGLNALLRIEMRGSKLHNRSSAPAPPLQAGTFTRGVVTMRCDVSTCSSAHISMLVSGNAQTCFSDQLLENHIKHEVVEKIQLVHSVVNSEETKRGFSEPRRSASIACGASVCEVSMQVPTWALQVLRQLAPDVSYRSLVVLGVASIQGLSVASFEKDDAERLLFFCGQQINDTSNHDALLSKIPNWLTPPLPTRKRSEPCRESKEIENGGPTSRKINVAALRPIPHTRRHKMIPFSGYSEIGRFDGDHTKGSLPMPPKHGASGGTPVTHRKAFSGSYQRKQIISLNPLPLKKHDCGRAHIQVCSEEEFLRDVMQFLLIRGHTRLVPPGGLAEFPDAVLNSKRLDLFNLYREVVSRGGFHVGNGINWKGQVFSKMRNHTLTNRMTGVGNTLKRHYETYLLEYEYAHDDVDGECCLICRSSTAGDWVNCGSCGEWAHFGCDRRPGLGAFKDYAKTDGLEYVCPNCSVSNYRKKSQKTSNGGLLVP.

Positions P454–P475 are disordered. Over residues K459–E471 the composition is skewed to basic and acidic residues. Residues V566–D670 form the ARID domain. The PHD-type zinc finger occupies G674–S730.

It localises to the nucleus. The sequence is that of AT-rich interactive domain-containing protein 4 (ARID4) from Arabidopsis thaliana (Mouse-ear cress).